Consider the following 441-residue polypeptide: uncharacterized protein (441 aa).

Residues 121 to 143 show a composition bias toward low complexity; sequence TLSPSIVSEQQQQQQQQQQQQQQ. 2 disordered regions span residues 121 to 146 and 371 to 392; these read TLSP…QAIS and SDAD…TAPN. The segment covering 382-391 has biased composition (polar residues); sequence PTSAPSTTAP.

This is an uncharacterized protein from Dictyostelium discoideum (Social amoeba).